Consider the following 113-residue polypeptide: Iron-sulfur cluster insertion protein ErpA (113 aa).

Residues Cys-41, Cys-105, and Cys-107 each contribute to the iron-sulfur cluster site.

Belongs to the HesB/IscA family. Homodimer. Iron-sulfur cluster serves as cofactor.

Functionally, required for insertion of 4Fe-4S clusters for at least IspG. This is Iron-sulfur cluster insertion protein ErpA from Glaesserella parasuis serovar 5 (strain SH0165) (Haemophilus parasuis).